Here is a 206-residue protein sequence, read N- to C-terminus: ATP-dependent Clp protease proteolytic subunit 2 (206 aa).

Ser-100 serves as the catalytic Nucleophile. His-125 is a catalytic residue.

This sequence belongs to the peptidase S14 family. As to quaternary structure, fourteen ClpP subunits assemble into 2 heptameric rings which stack back to back to give a disk-like structure with a central cavity, resembling the structure of eukaryotic proteasomes.

The protein resides in the cytoplasm. The catalysed reaction is Hydrolysis of proteins to small peptides in the presence of ATP and magnesium. alpha-casein is the usual test substrate. In the absence of ATP, only oligopeptides shorter than five residues are hydrolyzed (such as succinyl-Leu-Tyr-|-NHMec, and Leu-Tyr-Leu-|-Tyr-Trp, in which cleavage of the -Tyr-|-Leu- and -Tyr-|-Trp bonds also occurs).. In terms of biological role, cleaves peptides in various proteins in a process that requires ATP hydrolysis. Has a chymotrypsin-like activity. Plays a major role in the degradation of misfolded proteins. The polypeptide is ATP-dependent Clp protease proteolytic subunit 2 (Myxococcus xanthus).